The chain runs to 242 residues: Carboxy-S-adenosyl-L-methionine synthase (242 aa).

S-adenosyl-L-methionine contacts are provided by residues Tyr-39, 64-66 (GCS), 89-90 (DN), 117-118 (DI), Asn-132, and Arg-199.

It belongs to the class I-like SAM-binding methyltransferase superfamily. Cx-SAM synthase family. In terms of assembly, homodimer.

It catalyses the reaction prephenate + S-adenosyl-L-methionine = carboxy-S-adenosyl-L-methionine + 3-phenylpyruvate + H2O. In terms of biological role, catalyzes the conversion of S-adenosyl-L-methionine (SAM) to carboxy-S-adenosyl-L-methionine (Cx-SAM). This chain is Carboxy-S-adenosyl-L-methionine synthase, found in Aliivibrio salmonicida (strain LFI1238) (Vibrio salmonicida (strain LFI1238)).